The chain runs to 56 residues: Ovomucoid (56 aa).

In terms of domain architecture, Kazal-like spans 6–56 (VDCSEYPKPACTLEYRPLCGSDNKTYANKCNFCNAVVESNGTLTLSHFGKC). Intrachain disulfides connect Cys-8–Cys-38, Cys-16–Cys-35, and Cys-24–Cys-56. Asn-45 carries N-linked (GlcNAc...) asparagine glycosylation.

It is found in the secreted. The sequence is that of Ovomucoid from Callipepla californica (California quail).